Reading from the N-terminus, the 187-residue chain is Dihydrofolate reductase (187 aa).

The 182-residue stretch at Pro4–Lys185 folds into the DHFR domain. Residues Ala10 and Gly16–Asp22 contribute to the NADP(+) site. Residue Glu31–Gln36 coordinates substrate. Lys33 is modified (N6-acetyllysine; alternate). Residue Lys33 is modified to N6-succinyllysine; alternate. Residue Arg55–Thr57 coordinates NADP(+). A substrate-binding site is contributed by Arg71. NADP(+) is bound by residues Ser77 to Glu79 and Gly117 to Glu124.

It belongs to the dihydrofolate reductase family. Homodimer.

It is found in the mitochondrion. It localises to the cytoplasm. It carries out the reaction (6S)-5,6,7,8-tetrahydrofolate + NADP(+) = 7,8-dihydrofolate + NADPH + H(+). Its pathway is cofactor biosynthesis; tetrahydrofolate biosynthesis; 5,6,7,8-tetrahydrofolate from 7,8-dihydrofolate: step 1/1. In terms of biological role, key enzyme in folate metabolism. Contributes to the de novo mitochondrial thymidylate biosynthesis pathway. Catalyzes an essential reaction for de novo glycine and purine synthesis, and for DNA precursor synthesis. Binds its own mRNA. In Rattus norvegicus (Rat), this protein is Dihydrofolate reductase (Dhfr).